The primary structure comprises 489 residues: Long chain base biosynthesis protein 2d (489 aa).

The helical transmembrane segment at 4–24 threads the bilayer; the sequence is LPYVTALTTLFSYGLLFAFGQ. Position 311 is an N6-(pyridoxal phosphate)lysine (Lys311).

This sequence belongs to the class-II pyridoxal-phosphate-dependent aminotransferase family. Heterodimer with LCB1. Component of the serine palmitoyltransferase (SPT) complex, composed of LCB1 and LCB2. Pyridoxal 5'-phosphate serves as cofactor.

It is found in the endoplasmic reticulum membrane. It carries out the reaction L-serine + hexadecanoyl-CoA + H(+) = 3-oxosphinganine + CO2 + CoA. It participates in lipid metabolism; sphingolipid metabolism. Serine palmitoyltransferase (SPT). The heterodimer formed with LCB1 constitutes the catalytic core. The protein is Long chain base biosynthesis protein 2d of Oryza sativa subsp. japonica (Rice).